Here is a 514-residue protein sequence, read N- to C-terminus: MADSQPLSGAPEGAEYLRAVLRAPVYEAAQVTPLQKMEKLSSRLDNVILVKREDRQPVHSFKLRGAYAMMAGLTEEQKAHGVITASAGNHAQGVAFSSARLGVKALIVMPTATADIKVDAVRGFGGEVLLHGANFDEAKAKAIELSQQQGFTWVPPFDHPMVIAGQGTLALELLQQDAHLDRVFVPVGGGGLAAGVAVLIKQLMPQIKVIAVEAEDSACLKAALDAGHPVDLPRVGLFAEGVAVKRIGDETFRLCQEYLDDIITVDSDAICAAMKDLFEDVRAVAEPSGALALAGMKKYIALHNIRGERLAHILSGANVNFHGLRYVSERCELGEQREALLAVTIPEEKGSFLKFCQLLGGRSVTEFNYRFADAKNACIFVGVRLSRGLEERKEILQMLNDGGYSVVDLSDDEMAKLHVRYMVGGRPSHPLQERLYSFEFPESPGALLRFLNTLGTYWNISLFHYRSHGTDYGRVLAAFELGDHEPDFETRLNELGYDCHDETNNPAFRFFLAG.

K62 carries the post-translational modification N6-(pyridoxal phosphate)lysine. Residues N89, 188 to 192 (GGGGL), and S315 contribute to the pyridoxal 5'-phosphate site. 2 consecutive ACT-like domains span residues 339–411 (ALLA…DLSD) and 434–504 (RLYS…DETN).

It belongs to the serine/threonine dehydratase family. Homotetramer. The cofactor is pyridoxal 5'-phosphate.

It carries out the reaction L-threonine = 2-oxobutanoate + NH4(+). It participates in amino-acid biosynthesis; L-isoleucine biosynthesis; 2-oxobutanoate from L-threonine: step 1/1. Its activity is regulated as follows. Isoleucine allosterically inhibits whereas valine allosterically activates this enzyme. Catalyzes the anaerobic formation of alpha-ketobutyrate and ammonia from threonine in a two-step reaction. The first step involved a dehydration of threonine and a production of enamine intermediates (aminocrotonate), which tautomerizes to its imine form (iminobutyrate). Both intermediates are unstable and short-lived. The second step is the nonenzymatic hydrolysis of the enamine/imine intermediates to form 2-ketobutyrate and free ammonia. In the low water environment of the cell, the second step is accelerated by RidA. This Escherichia coli (strain K12) protein is L-threonine dehydratase biosynthetic IlvA (ilvA).